A 97-amino-acid chain; its full sequence is Co-chaperonin GroES (97 aa).

The protein belongs to the GroES chaperonin family. Heptamer of 7 subunits arranged in a ring. Interacts with the chaperonin GroEL.

The protein localises to the cytoplasm. Its function is as follows. Together with the chaperonin GroEL, plays an essential role in assisting protein folding. The GroEL-GroES system forms a nano-cage that allows encapsulation of the non-native substrate proteins and provides a physical environment optimized to promote and accelerate protein folding. GroES binds to the apical surface of the GroEL ring, thereby capping the opening of the GroEL channel. The chain is Co-chaperonin GroES from Stutzerimonas stutzeri (Pseudomonas stutzeri).